A 169-amino-acid polypeptide reads, in one-letter code: Glycine-rich RNA-binding protein 10 (169 aa).

The RRM domain occupies 6 to 84 (YRCFVGGLAW…RTITVNEAQS (79 aa)). Disordered regions lie at residues 80-101 (NEAQ…YGGR) and 121-169 (GYGS…GGGW). The span at 85–101 (RGGGGGGGRGGGGYGGR) shows a compositional bias: gly residues.

In terms of tissue distribution, expressed only in roots and stems.

In terms of biological role, possibly has a role in RNA transcription or processing during stress. The chain is Glycine-rich RNA-binding protein 10 (GRP10) from Brassica napus (Rape).